The sequence spans 86 residues: Large ribosomal subunit protein bL27 (86 aa).

A disordered region spans residues 1-26 (MATKKAGGSSRNGRDSAGRRLGVKQS).

It belongs to the bacterial ribosomal protein bL27 family.

This Rickettsia canadensis (strain McKiel) protein is Large ribosomal subunit protein bL27.